Here is a 138-residue protein sequence, read N- to C-terminus: ATP synthase epsilon chain (138 aa).

This sequence belongs to the ATPase epsilon chain family. F-type ATPases have 2 components, CF(1) - the catalytic core - and CF(0) - the membrane proton channel. CF(1) has five subunits: alpha(3), beta(3), gamma(1), delta(1), epsilon(1). CF(0) has three main subunits: a, b and c.

It is found in the cell membrane. Produces ATP from ADP in the presence of a proton gradient across the membrane. This is ATP synthase epsilon chain from Streptococcus uberis (strain ATCC BAA-854 / 0140J).